The primary structure comprises 98 residues: DNA-binding protein Fis (98 aa).

Positions 74-93 (QTRAAQMMGINRGTLRKKLK) form a DNA-binding region, H-T-H motif.

It belongs to the transcriptional regulatory Fis family. In terms of assembly, homodimer.

Functionally, activates ribosomal RNA transcription. Plays a direct role in upstream activation of rRNA promoters. In Sodalis glossinidius (strain morsitans), this protein is DNA-binding protein Fis.